A 415-amino-acid chain; its full sequence is Arginine biosynthesis bifunctional protein ArgJ (415 aa).

Positions 156, 182, 193, 279, 410, and 415 each coordinate substrate. Thr-193 (nucleophile) is an active-site residue.

This sequence belongs to the ArgJ family. Heterotetramer of two alpha and two beta chains.

Its subcellular location is the cytoplasm. It carries out the reaction N(2)-acetyl-L-ornithine + L-glutamate = N-acetyl-L-glutamate + L-ornithine. The catalysed reaction is L-glutamate + acetyl-CoA = N-acetyl-L-glutamate + CoA + H(+). It functions in the pathway amino-acid biosynthesis; L-arginine biosynthesis; L-ornithine and N-acetyl-L-glutamate from L-glutamate and N(2)-acetyl-L-ornithine (cyclic): step 1/1. The protein operates within amino-acid biosynthesis; L-arginine biosynthesis; N(2)-acetyl-L-ornithine from L-glutamate: step 1/4. Functionally, catalyzes two activities which are involved in the cyclic version of arginine biosynthesis: the synthesis of N-acetylglutamate from glutamate and acetyl-CoA as the acetyl donor, and of ornithine by transacetylation between N(2)-acetylornithine and glutamate. The polypeptide is Arginine biosynthesis bifunctional protein ArgJ (Synechococcus sp. (strain ATCC 27144 / PCC 6301 / SAUG 1402/1) (Anacystis nidulans)).